A 141-amino-acid polypeptide reads, in one-letter code: Aspartate 1-decarboxylase 1 (141 aa).

Catalysis depends on Ser-25, which acts as the Schiff-base intermediate with substrate; via pyruvic acid. A Pyruvic acid (Ser) modification is found at Ser-25. Residue Thr-57 participates in substrate binding. The active-site Proton donor is the Tyr-58. 73–75 (GPA) contributes to the substrate binding site.

This sequence belongs to the PanD family. In terms of assembly, heterooctamer of four alpha and four beta subunits. The cofactor is pyruvate. Post-translationally, is synthesized initially as an inactive proenzyme, which is activated by self-cleavage at a specific serine bond to produce a beta-subunit with a hydroxyl group at its C-terminus and an alpha-subunit with a pyruvoyl group at its N-terminus.

The protein localises to the cytoplasm. The enzyme catalyses L-aspartate + H(+) = beta-alanine + CO2. The protein operates within cofactor biosynthesis; (R)-pantothenate biosynthesis; beta-alanine from L-aspartate: step 1/1. Catalyzes the pyruvoyl-dependent decarboxylation of aspartate to produce beta-alanine. The protein is Aspartate 1-decarboxylase 1 of Paenarthrobacter aurescens (strain TC1).